The sequence spans 155 residues: Large ribosomal subunit protein uL22 (155 aa).

Belongs to the universal ribosomal protein uL22 family. As to quaternary structure, part of the 50S ribosomal subunit.

Functionally, this protein binds specifically to 23S rRNA. It makes multiple contacts with different domains of the 23S rRNA in the assembled 50S subunit and ribosome. In terms of biological role, the globular domain of the protein is located near the polypeptide exit tunnel on the outside of the subunit, while an extended beta-hairpin is found that lines the wall of the exit tunnel in the center of the 70S ribosome. The chain is Large ribosomal subunit protein uL22 from Pyrococcus horikoshii (strain ATCC 700860 / DSM 12428 / JCM 9974 / NBRC 100139 / OT-3).